Here is a 94-residue protein sequence, read N- to C-terminus: Putative pterin-4-alpha-carbinolamine dehydratase (94 aa).

This sequence belongs to the pterin-4-alpha-carbinolamine dehydratase family.

The catalysed reaction is (4aS,6R)-4a-hydroxy-L-erythro-5,6,7,8-tetrahydrobiopterin = (6R)-L-erythro-6,7-dihydrobiopterin + H2O. The polypeptide is Putative pterin-4-alpha-carbinolamine dehydratase (Mycobacterium tuberculosis (strain ATCC 25177 / H37Ra)).